Reading from the N-terminus, the 381-residue chain is Outer membrane protein assembly factor BamB (381 aa).

Positions 1 to 22 (MNLLKRYAAPVACAAAVLVFAA) are cleaved as a signal peptide. Residue C23 is the site of N-palmitoyl cysteine attachment. C23 carries S-diacylglycerol cysteine lipidation.

It belongs to the BamB family. In terms of assembly, part of the Bam complex.

The protein localises to the cell outer membrane. Its function is as follows. Part of the outer membrane protein assembly complex, which is involved in assembly and insertion of beta-barrel proteins into the outer membrane. This chain is Outer membrane protein assembly factor BamB, found in Burkholderia pseudomallei (strain K96243).